The sequence spans 352 residues: tRNA N6-adenosine threonylcarbamoyltransferase (352 aa).

Positions 115 and 119 each coordinate Fe cation. Substrate-binding positions include 138 to 142 (LVSGG), Asp-171, Gly-184, and Asn-276. Asp-304 contacts Fe cation.

Belongs to the KAE1 / TsaD family. Fe(2+) serves as cofactor.

The protein resides in the cytoplasm. It carries out the reaction L-threonylcarbamoyladenylate + adenosine(37) in tRNA = N(6)-L-threonylcarbamoyladenosine(37) in tRNA + AMP + H(+). Functionally, required for the formation of a threonylcarbamoyl group on adenosine at position 37 (t(6)A37) in tRNAs that read codons beginning with adenine. Is involved in the transfer of the threonylcarbamoyl moiety of threonylcarbamoyl-AMP (TC-AMP) to the N6 group of A37, together with TsaE and TsaB. TsaD likely plays a direct catalytic role in this reaction. In Xanthomonas axonopodis pv. citri (strain 306), this protein is tRNA N6-adenosine threonylcarbamoyltransferase.